Consider the following 612-residue polypeptide: Dihydroxy-acid dehydratase (612 aa).

D81 serves as a coordination point for Mg(2+). Residue C122 participates in [2Fe-2S] cluster binding. Mg(2+)-binding residues include D123 and K124. K124 bears the N6-carboxylysine mark. Residue C195 participates in [2Fe-2S] cluster binding. E491 provides a ligand contact to Mg(2+). The active-site Proton acceptor is S517.

It belongs to the IlvD/Edd family. Homodimer. [2Fe-2S] cluster is required as a cofactor. It depends on Mg(2+) as a cofactor.

The catalysed reaction is (2R)-2,3-dihydroxy-3-methylbutanoate = 3-methyl-2-oxobutanoate + H2O. It catalyses the reaction (2R,3R)-2,3-dihydroxy-3-methylpentanoate = (S)-3-methyl-2-oxopentanoate + H2O. The protein operates within amino-acid biosynthesis; L-isoleucine biosynthesis; L-isoleucine from 2-oxobutanoate: step 3/4. Its pathway is amino-acid biosynthesis; L-valine biosynthesis; L-valine from pyruvate: step 3/4. In terms of biological role, functions in the biosynthesis of branched-chain amino acids. Catalyzes the dehydration of (2R,3R)-2,3-dihydroxy-3-methylpentanoate (2,3-dihydroxy-3-methylvalerate) into 2-oxo-3-methylpentanoate (2-oxo-3-methylvalerate) and of (2R)-2,3-dihydroxy-3-methylbutanoate (2,3-dihydroxyisovalerate) into 2-oxo-3-methylbutanoate (2-oxoisovalerate), the penultimate precursor to L-isoleucine and L-valine, respectively. The chain is Dihydroxy-acid dehydratase from Bartonella tribocorum (strain CIP 105476 / IBS 506).